The sequence spans 37 residues: Large ribosomal subunit protein bL36 (37 aa).

The protein belongs to the bacterial ribosomal protein bL36 family.

This chain is Large ribosomal subunit protein bL36, found in Methylibium petroleiphilum (strain ATCC BAA-1232 / LMG 22953 / PM1).